A 259-amino-acid polypeptide reads, in one-letter code: ATP synthase subunit a (259 aa).

6 helical membrane passes run 37–57, 101–121, 131–151, 157–177, 203–223, and 232–252; these read LSIT…FLFM, YFPA…LGLI, LVVT…LAIV, FIGF…MVPI, VLAI…LMPA, and FELF…CVYI.

Belongs to the ATPase A chain family. In terms of assembly, F-type ATPases have 2 components, CF(1) - the catalytic core - and CF(0) - the membrane proton channel. CF(1) has five subunits: alpha(3), beta(3), gamma(1), delta(1), epsilon(1). CF(0) has three main subunits: a(1), b(2) and c(9-12). The alpha and beta chains form an alternating ring which encloses part of the gamma chain. CF(1) is attached to CF(0) by a central stalk formed by the gamma and epsilon chains, while a peripheral stalk is formed by the delta and b chains.

It localises to the cell inner membrane. Functionally, key component of the proton channel; it plays a direct role in the translocation of protons across the membrane. This is ATP synthase subunit a from Magnetococcus marinus (strain ATCC BAA-1437 / JCM 17883 / MC-1).